We begin with the raw amino-acid sequence, 415 residues long: Phosphoglycerate transport system transcriptional regulatory protein PgtA (415 aa).

The Response regulatory domain occupies 7-121; that stretch reads SILLIDDDVD…KLLILIEDAL (115 aa). A 4-aspartylphosphate modification is found at Asp-56. The region spanning 142-341 is the Sigma-54 factor interaction domain; it reads LIGRSEWMNQ…LANAAELFAV (200 aa). 170-177 contacts ATP; it reads GEHGTGRM. Residues 385–404 constitute a DNA-binding region (H-T-H motif); the sequence is INEVAEYLQIPRKKLYLRMK.

Phosphorylated by PgtB.

Its subcellular location is the cytoplasm. Its function is as follows. Member of the two-component regulatory system PgtB/PgtA that regulates the inducible phosphoglycerate transport system. When activated by PgtB it acts in conjunction with sigma-54 as a transcriptional activator. This chain is Phosphoglycerate transport system transcriptional regulatory protein PgtA (pgtA), found in Salmonella typhimurium (strain LT2 / SGSC1412 / ATCC 700720).